A 393-amino-acid polypeptide reads, in one-letter code: NAD(P)H-quinone oxidoreductase subunit H, chloroplastic (393 aa).

It belongs to the complex I 49 kDa subunit family. In terms of assembly, NDH is composed of at least 16 different subunits, 5 of which are encoded in the nucleus.

It localises to the plastid. The protein localises to the chloroplast thylakoid membrane. It catalyses the reaction a plastoquinone + NADH + (n+1) H(+)(in) = a plastoquinol + NAD(+) + n H(+)(out). It carries out the reaction a plastoquinone + NADPH + (n+1) H(+)(in) = a plastoquinol + NADP(+) + n H(+)(out). In terms of biological role, NDH shuttles electrons from NAD(P)H:plastoquinone, via FMN and iron-sulfur (Fe-S) centers, to quinones in the photosynthetic chain and possibly in a chloroplast respiratory chain. The immediate electron acceptor for the enzyme in this species is believed to be plastoquinone. Couples the redox reaction to proton translocation, and thus conserves the redox energy in a proton gradient. This Manihot esculenta (Cassava) protein is NAD(P)H-quinone oxidoreductase subunit H, chloroplastic.